Here is a 232-residue protein sequence, read N- to C-terminus: GTP cyclohydrolase 1 (232 aa).

The disordered stretch occupies residues 1–24; the sequence is MSDNLKSYQDNHIENEDEEIYERS. The Zn(2+) site is built by Cys121, His124, and Cys192.

This sequence belongs to the GTP cyclohydrolase I family. In terms of assembly, toroid-shaped homodecamer, composed of two pentamers of five dimers.

The catalysed reaction is GTP + H2O = 7,8-dihydroneopterin 3'-triphosphate + formate + H(+). It functions in the pathway cofactor biosynthesis; 7,8-dihydroneopterin triphosphate biosynthesis; 7,8-dihydroneopterin triphosphate from GTP: step 1/1. First enzyme in the biosynthesis of tetrahydrobiopterin (BH4). Catalyzes the conversion of GTP into dihydroneopterin triphosphate (7,8-dihydroneopterin 3'-triphosphate), which is subsequently catalyzed by 6-pyruvoyltetrahydropterin synthase (ptsA) and sepiapterin reductase (sprA). This is GTP cyclohydrolase 1 (gchA) from Dictyostelium discoideum (Social amoeba).